We begin with the raw amino-acid sequence, 389 residues long: MRVIAIVLDSVGIGEMPDSSEYGDQGSNTLVNTARAVGKLNLPNLAKMGLGNLDTIEGVPSMPAKGAYGVMLEKSPGKDSTTGHWELAGIILKKPFDLFPNGFPENLIKEFEKRTGRRVIGNKPASGTEIIKELGLEHEQTGALIVYTSADSVFQIAAKEEIVPVEELYRCCEIARDLLDEFGFKVGRVIARPFTGNYPDYVRTPRRHDYSLEPEDEMLLDVLVQSDIPVYGVGKIYDLYAGRGITESYKTDSNIDGIQKTIKLIMEKQHTCFIYTNLVDYDMKYGHRNDPHGYAKALEEFDFNLPEIWKNMKEDDFLFITADHGCDPTTPSTDHSRERVPILVCGSKVRKNVYLGIRESFADFGQTIADLFGVRKLNNGTSFKSLLLH.

Residues Asp9, Asp282, His287, Asp323, His324, and His335 each coordinate Mn(2+).

This sequence belongs to the phosphopentomutase family. Requires Mn(2+) as cofactor.

Its subcellular location is the cytoplasm. The enzyme catalyses 2-deoxy-alpha-D-ribose 1-phosphate = 2-deoxy-D-ribose 5-phosphate. It catalyses the reaction alpha-D-ribose 1-phosphate = D-ribose 5-phosphate. The protein operates within carbohydrate degradation; 2-deoxy-D-ribose 1-phosphate degradation; D-glyceraldehyde 3-phosphate and acetaldehyde from 2-deoxy-alpha-D-ribose 1-phosphate: step 1/2. Its function is as follows. Isomerase that catalyzes the conversion of deoxy-ribose 1-phosphate (dRib-1-P) and ribose 1-phosphate (Rib-1-P) to deoxy-ribose 5-phosphate (dRib-5-P) and ribose 5-phosphate (Rib-5-P), respectively. In Pseudothermotoga lettingae (strain ATCC BAA-301 / DSM 14385 / NBRC 107922 / TMO) (Thermotoga lettingae), this protein is Phosphopentomutase.